A 428-amino-acid polypeptide reads, in one-letter code: 3-phosphoshikimate 1-carboxyvinyltransferase (428 aa).

3-phosphoshikimate contacts are provided by Lys23, Ser24, and Arg28. Position 23 (Lys23) interacts with phosphoenolpyruvate. Residues Gly97 and Arg125 each coordinate phosphoenolpyruvate. The 3-phosphoshikimate site is built by Ser170, Ser171, Gln172, Ser198, Asp314, Asn337, and Lys341. Residue Gln172 participates in phosphoenolpyruvate binding. The active-site Proton acceptor is the Asp314. Residues Arg345, Arg387, and Lys412 each contribute to the phosphoenolpyruvate site.

Belongs to the EPSP synthase family. As to quaternary structure, monomer.

It localises to the cytoplasm. It catalyses the reaction 3-phosphoshikimate + phosphoenolpyruvate = 5-O-(1-carboxyvinyl)-3-phosphoshikimate + phosphate. The protein operates within metabolic intermediate biosynthesis; chorismate biosynthesis; chorismate from D-erythrose 4-phosphate and phosphoenolpyruvate: step 6/7. Its function is as follows. Catalyzes the transfer of the enolpyruvyl moiety of phosphoenolpyruvate (PEP) to the 5-hydroxyl of shikimate-3-phosphate (S3P) to produce enolpyruvyl shikimate-3-phosphate and inorganic phosphate. In Yersinia pestis bv. Antiqua (strain Antiqua), this protein is 3-phosphoshikimate 1-carboxyvinyltransferase.